We begin with the raw amino-acid sequence, 1741 residues long: Protein wings apart-like (1741 aa).

9 disordered regions span residues 68-100 (SPSQ…FFKS), 119-277 (CGAG…EVAA), 291-472 (SSTF…KPPK), 490-612 (KAAA…VQED), 675-810 (LAVL…ASVN), 823-963 (KAEA…QRGA), 1038-1068 (AAGK…STLR), 1112-1141 (SAAG…RVDR), and 1708-1741 (TSST…SSHR). Basic residues predominate over residues 165–174 (RKRKSPKKKA). A compositionally biased stretch (low complexity) spans 175–185 (ATTSASTPSTP). The residue at position 258 (Thr258) is a Phosphothreonine. A compositionally biased stretch (low complexity) spans 309-334 (APSASASTSSQLPSASGSASNPPSAS). Ser355 bears the Phosphoserine mark. A compositionally biased stretch (polar residues) spans 367–377 (AHQNQLNQLSV). A compositionally biased stretch (low complexity) spans 408-426 (AADSVDGSSAAVGGASAGD). Acidic residues predominate over residues 438–456 (PNEDEEEEEEEEDEEEEPP). Residues 503 to 512 (SRSKKHKHKQ) show a composition bias toward basic residues. Composition is skewed to low complexity over residues 515–529 (AAGS…ATPA) and 553–568 (QHTP…LHPQ). Residues 586-604 (SQSSVLGSISSKGNSTPQL) show a composition bias toward polar residues. 2 stretches are compositionally biased toward low complexity: residues 796-810 (NAAA…ASVN) and 849-859 (QQVTQVLQQEP). Residues 860–873 (VPEEQETPDAEEEQ) show a composition bias toward acidic residues. A compositionally biased stretch (basic and acidic residues) spans 880 to 894 (PHTDHREHSPDHDPD). Ser888 is modified (phosphoserine). 2 stretches are compositionally biased toward low complexity: residues 939–952 (GAAN…AAAA) and 1047–1065 (GDSP…SSAS). Residues 1117-1136 (SAGGTGATTGGGGATGGGGP) show a composition bias toward gly residues. The region spanning 1140–1648 (DRKTKDYYPV…EKYHTFMNLT (509 aa)) is the WAPL domain. A compositionally biased stretch (low complexity) spans 1708–1730 (TSSTTVGSGSAPSSTSATGTTRA).

Belongs to the WAPL family.

Its function is as follows. Has a role in female meiotic chromosome segregation in females; proximal heterochromatin is involved in chromosome pairing during female meiosis. Is a dominant suppressor of both white and Stubble position-effect variegation (PEV), while it is a weak enhancer of brown variegation. The sequence is that of Protein wings apart-like from Drosophila melanogaster (Fruit fly).